Consider the following 110-residue polypeptide: Putative membrane protein insertion efficiency factor (110 aa).

Belongs to the UPF0161 family.

The protein resides in the cell inner membrane. Could be involved in insertion of integral membrane proteins into the membrane. This Aliarcobacter butzleri (strain RM4018) (Arcobacter butzleri) protein is Putative membrane protein insertion efficiency factor.